The following is a 288-amino-acid chain: Alpha/beta hydrolase domain-containing protein 17B (288 aa).

Catalysis depends on charge relay system residues serine 170, aspartate 235, and histidine 264.

It belongs to the AB hydrolase superfamily. ABHD17 family. Palmitoylated on cysteine residues located in a cysteine cluster at the N-terminus which promotes membrane localization.

The protein localises to the cell membrane. The protein resides in the recycling endosome membrane. It is found in the cell projection. Its subcellular location is the dendritic spine. It localises to the postsynaptic density membrane. It catalyses the reaction S-hexadecanoyl-L-cysteinyl-[protein] + H2O = L-cysteinyl-[protein] + hexadecanoate + H(+). Hydrolyzes fatty acids from S-acylated cysteine residues in proteins. Has depalmitoylating activity towards NRAS. In Gallus gallus (Chicken), this protein is Alpha/beta hydrolase domain-containing protein 17B.